A 394-amino-acid chain; its full sequence is Elongation factor Tu (394 aa).

The 195-residue stretch at Lys-10–Thr-204 folds into the tr-type G domain. The tract at residues Gly-19–Thr-26 is G1. Gly-19–Thr-26 contributes to the GTP binding site. Position 26 (Thr-26) interacts with Mg(2+). The interval Gly-60–Asn-64 is G2. Residues Asp-81–Gly-84 form a G3 region. Residues Asp-81–His-85 and Asn-136–Asp-139 each bind GTP. The tract at residues Asn-136–Asp-139 is G4. Residues Ser-174–Leu-176 form a G5 region.

Belongs to the TRAFAC class translation factor GTPase superfamily. Classic translation factor GTPase family. EF-Tu/EF-1A subfamily. As to quaternary structure, monomer.

Its subcellular location is the cytoplasm. The enzyme catalyses GTP + H2O = GDP + phosphate + H(+). Its function is as follows. GTP hydrolase that promotes the GTP-dependent binding of aminoacyl-tRNA to the A-site of ribosomes during protein biosynthesis. The protein is Elongation factor Tu of Malacoplasma penetrans (strain HF-2) (Mycoplasma penetrans).